The chain runs to 129 residues: Small ribosomal subunit protein uS11 (129 aa).

It belongs to the universal ribosomal protein uS11 family. Part of the 30S ribosomal subunit. Interacts with proteins S7 and S18. Binds to IF-3.

In terms of biological role, located on the platform of the 30S subunit, it bridges several disparate RNA helices of the 16S rRNA. Forms part of the Shine-Dalgarno cleft in the 70S ribosome. This Mesorhizobium japonicum (strain LMG 29417 / CECT 9101 / MAFF 303099) (Mesorhizobium loti (strain MAFF 303099)) protein is Small ribosomal subunit protein uS11.